A 130-amino-acid polypeptide reads, in one-letter code: Iron-sulfur cluster insertion protein ErpA (130 aa).

Positions 46, 116, and 118 each coordinate iron-sulfur cluster.

It belongs to the HesB/IscA family. Homodimer. Iron-sulfur cluster is required as a cofactor.

Its function is as follows. Required for insertion of 4Fe-4S clusters for at least IspG. The protein is Iron-sulfur cluster insertion protein ErpA of Legionella pneumophila (strain Lens).